Here is a 338-residue protein sequence, read N- to C-terminus: Putative clathrin assembly protein At5g10410 (338 aa).

The ENTH domain maps to 27–157 (FGSTAVKYIH…WVPKVLGSFP (131 aa)).

Its subcellular location is the membrane. It localises to the clathrin-coated pit. It is found in the golgi apparatus. The protein localises to the cytoplasmic vesicle. The protein resides in the clathrin-coated vesicle. This Arabidopsis thaliana (Mouse-ear cress) protein is Putative clathrin assembly protein At5g10410.